Reading from the N-terminus, the 556-residue chain is Formate--tetrahydrofolate ligase 1 (556 aa).

An ATP-binding site is contributed by 65–72 (TPAGEGKS).

Belongs to the formate--tetrahydrofolate ligase family.

The enzyme catalyses (6S)-5,6,7,8-tetrahydrofolate + formate + ATP = (6R)-10-formyltetrahydrofolate + ADP + phosphate. Its pathway is one-carbon metabolism; tetrahydrofolate interconversion. The sequence is that of Formate--tetrahydrofolate ligase 1 from Streptococcus pyogenes serotype M28 (strain MGAS6180).